We begin with the raw amino-acid sequence, 388 residues long: Chorismate synthase (388 aa).

Positions 39 and 45 each coordinate NADP(+). Residues 130 to 132 (RSS), 251 to 252 (NA), G296, 311 to 315 (KPIPT), and R337 contribute to the FMN site.

Belongs to the chorismate synthase family. In terms of assembly, homotetramer. It depends on FMNH2 as a cofactor.

The catalysed reaction is 5-O-(1-carboxyvinyl)-3-phosphoshikimate = chorismate + phosphate. Its pathway is metabolic intermediate biosynthesis; chorismate biosynthesis; chorismate from D-erythrose 4-phosphate and phosphoenolpyruvate: step 7/7. In terms of biological role, catalyzes the anti-1,4-elimination of the C-3 phosphate and the C-6 proR hydrogen from 5-enolpyruvylshikimate-3-phosphate (EPSP) to yield chorismate, which is the branch point compound that serves as the starting substrate for the three terminal pathways of aromatic amino acid biosynthesis. This reaction introduces a second double bond into the aromatic ring system. The chain is Chorismate synthase from Lactococcus lactis subsp. cremoris (strain SK11).